The following is a 325-amino-acid chain: WUSCHEL-related homeobox 8 (325 aa).

A DNA-binding region (homeobox; WUS-type) is located at residues 51–115 (DPKPRWNPKP…NRKSRAKHKL (65 aa)).

It belongs to the WUS homeobox family. As to expression, expressed only in the egg cell. Not detected in the pollen tube. Expressed in the zygote, the basal cell, and later the suspensor. Expressed in all suspensor cells, except the hypophysis, and in the embryo surrounding region (ESR) endosperm cells. Strongly expressed in the suspensor cells, with a weak expression also detected throughout the developing embryo.

It localises to the nucleus. In terms of biological role, probable transcription factor, which may be involved in embryonic patterning. May be required for basal embryo development after fertilization. Acts partially redundantly with STIP in promoting embryonic cell division and proliferation. Promotes cotyledon boundary formation by maintaining the symmetry in CUC genes expression domains. The sequence is that of WUSCHEL-related homeobox 8 from Arabidopsis thaliana (Mouse-ear cress).